The following is a 272-amino-acid chain: Prohibitin 1 (272 aa).

A coiled-coil region spans residues Lys177–Val211.

The mitochondrial prohibitin complex consists of two subunits (PHB1 and PHB2), assembled into a membrane-associated ring-shaped supercomplex of approximately 1 mDa.

Its subcellular location is the mitochondrion inner membrane. The protein localises to the nucleus. It is found in the cytoplasm. The protein resides in the cell membrane. Protein with pleiotropic attributes mediated in a cell-compartment- and tissue-specific manner, which include the plasma membrane-associated cell signaling functions, mitochondrial chaperone, and transcriptional co-regulator of transcription factors in the nucleus. Functionally, in the mitochondria, together with PHB2, forms large ring complexes (prohibitin complexes) in the inner mitochondrial membrane (IMM) and functions as a chaperone protein that stabilizes mitochondrial respiratory enzymes and maintains mitochondrial integrity in the IMM, which is required for mitochondrial morphogenesis, neuronal survival, and normal lifespan. Its function is as follows. In the nucleus, acts as a transcription coregulator, enhances promoter binding by TP53, a transcription factor it activates, but reduces the promoter binding by E2F1, a transcription factor it represses. In terms of biological role, in the plasma membrane, cooperates with CD86 to mediate CD86-signaling in B lymphocytes that regulates the level of IgG1 produced through the activation of distal signaling intermediates. Upon CD40 engagement, required to activate NF-kappa-B signaling pathway via phospholipase C and protein kinase C activation. The sequence is that of Prohibitin 1 (PHB1) from Gallus gallus (Chicken).